Here is a 216-residue protein sequence, read N- to C-terminus: ATP synthase subunit 5, mitochondrial (216 aa).

It belongs to the ATPase delta chain family. As to quaternary structure, F-type ATPases have 2 components, CF(1) - the catalytic core - and CF(0) - the membrane proton channel. CF(1) has five subunits: alpha(3), beta(3), gamma(1), delta(1), epsilon(1). CF(0) has three main subunits: a, b and c.

It is found in the mitochondrion. Its subcellular location is the mitochondrion inner membrane. Mitochondrial membrane ATP synthase (F(1)F(0) ATP synthase or Complex V) produces ATP from ADP in the presence of a proton gradient across the membrane which is generated by electron transport complexes of the respiratory chain. F-type ATPases consist of two structural domains, F(1) - containing the extramembraneous catalytic core and F(0) - containing the membrane proton channel, linked together by a central stalk and a peripheral stalk. During catalysis, ATP synthesis in the catalytic domain of F(1) is coupled via a rotary mechanism of the central stalk subunits to proton translocation. Part of the complex F(0) domain and the peripheric stalk, which acts as a stator to hold the catalytic alpha(3)beta(3) subcomplex and subunit a/ATP6 static relative to the rotary elements. This is ATP synthase subunit 5, mitochondrial (atp5) from Schizosaccharomyces pombe (strain 972 / ATCC 24843) (Fission yeast).